A 437-amino-acid chain; its full sequence is Serine hydroxymethyltransferase 1 (437 aa).

Residues leucine 132 and 136–138 (GHL) contribute to the (6S)-5,6,7,8-tetrahydrofolate site. Lysine 241 carries the N6-(pyridoxal phosphate)lysine modification.

The protein belongs to the SHMT family. Homodimer. It depends on pyridoxal 5'-phosphate as a cofactor.

It localises to the cytoplasm. The catalysed reaction is (6R)-5,10-methylene-5,6,7,8-tetrahydrofolate + glycine + H2O = (6S)-5,6,7,8-tetrahydrofolate + L-serine. It functions in the pathway one-carbon metabolism; tetrahydrofolate interconversion. It participates in amino-acid biosynthesis; glycine biosynthesis; glycine from L-serine: step 1/1. Catalyzes the reversible interconversion of serine and glycine with tetrahydrofolate (THF) serving as the one-carbon carrier. This reaction serves as the major source of one-carbon groups required for the biosynthesis of purines, thymidylate, methionine, and other important biomolecules. Also exhibits THF-independent aldolase activity toward beta-hydroxyamino acids, producing glycine and aldehydes, via a retro-aldol mechanism. The sequence is that of Serine hydroxymethyltransferase 1 from Mesorhizobium japonicum (strain LMG 29417 / CECT 9101 / MAFF 303099) (Mesorhizobium loti (strain MAFF 303099)).